We begin with the raw amino-acid sequence, 375 residues long: Pulmonary surfactant-associated protein D (375 aa).

A signal peptide spans 1–21; the sequence is MLLFLLSALVLLTQSLGYLEA. C35 and C40 each carry S-nitrosocysteine. The disordered stretch occupies residues 43–221; the sequence is VESGLPGRDG…DKGAKGESGL (179 aa). Positions 46–222 constitute a Collagen-like domain; it reads GLPGRDGRDG…KGAKGESGLP (177 aa). A compositionally biased stretch (basic and acidic residues) spans 50–65; it reads RDGRDGREGPRGEKGD. P78 is modified (4-hydroxyproline). K87 carries the post-translational modification 5-hydroxylysine. A glycan (N-linked (GlcNAc...) asparagine) is linked at N90. The residue at position 96 (P96) is a 4-hydroxyproline. At K99 the chain carries 5-hydroxylysine. Residues 105 to 114 show a composition bias toward pro residues; the sequence is SGPPGPPGVP. Low complexity-rich tracts occupy residues 116-132 and 138-150; these read PAGR…IGPQ and KGEA…VGAP. Residues P171 and P177 each carry the 4-hydroxyproline modification. A compositionally biased stretch (low complexity) spans 173-189; sequence ERGAPGNAGAAGSAGVM. Residues 204-216 are compositionally biased toward basic and acidic residues; it reads KGDKGVPGDKGAK. The stretch at 223–251 forms a coiled coil; it reads DVASLRQQVEALQKQVQHLQAAFSQYKKV. Residues 260-374 enclose the C-type lectin domain; that stretch reads VGEKIFKTAG…CGEKRLVVCE (115 aa). Intrachain disulfides connect C281–C373 and C351–C365.

This sequence belongs to the SFTPD family. In terms of assembly, oligomeric complex of 4 set of homotrimers. Hydroxylation on proline residues within the sequence motif, GXPG, is most likely to be 4-hydroxy as this fits the requirement for 4-hydroxylation in vertebrates. In terms of processing, S-nitrosylation at Cys-35 and Cys-40 alters the quaternary structure which results in a pro-inflammatory chemoattractive signaling activity with macrophages.

Its subcellular location is the secreted. The protein resides in the extracellular space. It localises to the extracellular matrix. The protein localises to the surface film. In terms of biological role, contributes to the lung's defense against inhaled microorganisms, organic antigens and toxins. Interacts with compounds such as bacterial lipopolysaccharides, oligosaccharides and fatty acids and modulates leukocyte action in immune response. May participate in the extracellular reorganization or turnover of pulmonary surfactant. Binds strongly maltose residues and to a lesser extent other alpha-glucosyl moieties. In Macaca mulatta (Rhesus macaque), this protein is Pulmonary surfactant-associated protein D (SFTPD).